Consider the following 354-residue polypeptide: Caffeate O-methyltransferase-like protein 2 (354 aa).

Residues glycine 198, aspartate 221, methionine 242, and lysine 255 each contribute to the S-adenosyl-L-homocysteine site. The active-site Proton acceptor is the histidine 259. Residues glutamate 287 and glutamate 319 contribute to the active site.

It belongs to the class I-like SAM-binding methyltransferase superfamily. Cation-independent O-methyltransferase family. COMT subfamily.

The polypeptide is Caffeate O-methyltransferase-like protein 2 (Oryza sativa subsp. japonica (Rice)).